The sequence spans 389 residues: Chalcone synthase A (389 aa).

Residue C164 is part of the active site.

Belongs to the thiolase-like superfamily. Chalcone/stilbene synthases family. As to expression, major expressed member of the gene family in various floral tissues and in seedlings treated with UV light. It is relatively low expressed in tissue culture material.

The catalysed reaction is (E)-4-coumaroyl-CoA + 3 malonyl-CoA + 3 H(+) = 2',4,4',6'-tetrahydroxychalcone + 3 CO2 + 4 CoA. The protein operates within secondary metabolite biosynthesis; flavonoid biosynthesis. The primary product of this enzyme is 4,2',4',6'-tetrahydroxychalcone (also termed naringenin-chalcone or chalcone) which can under specific conditions spontaneously isomerize into naringenin. This chain is Chalcone synthase A (CHSA), found in Petunia hybrida (Petunia).